The following is a 710-amino-acid chain: Methionine--tRNA ligase (710 aa).

Positions 26–36 match the 'HIGH' region motif; sequence PYANGQIHIGH. Zn(2+)-binding residues include cysteine 157, cysteine 160, cysteine 170, and cysteine 173. The 'KMSKS' region motif lies at 347 to 351; sequence KMSKS. Lysine 350 provides a ligand contact to ATP. Residues 604–710 enclose the tRNA-binding domain; it reads DFAKIDLRIA…SGAKPGMRVK (107 aa).

Belongs to the class-I aminoacyl-tRNA synthetase family. MetG type 1 subfamily. Homodimer. Requires Zn(2+) as cofactor.

It is found in the cytoplasm. The enzyme catalyses tRNA(Met) + L-methionine + ATP = L-methionyl-tRNA(Met) + AMP + diphosphate. In terms of biological role, is required not only for elongation of protein synthesis but also for the initiation of all mRNA translation through initiator tRNA(fMet) aminoacylation. The chain is Methionine--tRNA ligase from Paraburkholderia xenovorans (strain LB400).